A 640-amino-acid polypeptide reads, in one-letter code: Scarecrow-like protein 27 (640 aa).

2 stretches are compositionally biased toward low complexity: residues 68-79 (SYSSTTTTLSSS) and 86-98 (TVTN…GDDN). The segment at 68–98 (SYSSTTTTLSSSHGGGGTTVTNTTVTAGDDN) is disordered. Positions 259–639 (GMAGDDQSVI…KELVTVSAWK (381 aa)) constitute a GRAS domain. The tract at residues 266–331 (SVIIEQLFNA…AEALLSLIHN (66 aa)) is leucine repeat I (LRI). A VHIID region spans residues 350 to 422 (YRSFSETSPF…NRASSLKLTV (73 aa)). The VHIID motif lies at 383 to 387 (IHIID). The tract at residues 438–470 (FTEENLKTFAGEVKIPFEIELLSVELLLNPAYW) is leucine repeat II (LRII). The segment at 480-565 (EAIAVNLPVN…RFWVQPSIEK (86 aa)) is PFYRE. Residues 568-639 (MKRHRWIERS…KELVTVSAWK (72 aa)) form an SAW region.

Belongs to the GRAS family. In terms of tissue distribution, expressed in seedlings, roots, cotyledons, leaves and flowers.

Its subcellular location is the nucleus. Functionally, probable transcription factor involved in plant development. The chain is Scarecrow-like protein 27 (SCL27) from Arabidopsis thaliana (Mouse-ear cress).